The following is a 93-amino-acid chain: Pyrimidine/purine nucleoside phosphorylase (93 aa).

The protein belongs to the nucleoside phosphorylase PpnP family.

The enzyme catalyses a purine D-ribonucleoside + phosphate = a purine nucleobase + alpha-D-ribose 1-phosphate. The catalysed reaction is adenosine + phosphate = alpha-D-ribose 1-phosphate + adenine. It catalyses the reaction cytidine + phosphate = cytosine + alpha-D-ribose 1-phosphate. It carries out the reaction guanosine + phosphate = alpha-D-ribose 1-phosphate + guanine. The enzyme catalyses inosine + phosphate = alpha-D-ribose 1-phosphate + hypoxanthine. The catalysed reaction is thymidine + phosphate = 2-deoxy-alpha-D-ribose 1-phosphate + thymine. It catalyses the reaction uridine + phosphate = alpha-D-ribose 1-phosphate + uracil. It carries out the reaction xanthosine + phosphate = alpha-D-ribose 1-phosphate + xanthine. Functionally, catalyzes the phosphorolysis of diverse nucleosides, yielding D-ribose 1-phosphate and the respective free bases. Can use uridine, adenosine, guanosine, cytidine, thymidine, inosine and xanthosine as substrates. Also catalyzes the reverse reactions. The polypeptide is Pyrimidine/purine nucleoside phosphorylase (Pseudomonas aeruginosa (strain LESB58)).